The following is a 260-amino-acid chain: Acyl-coenzyme A diphosphatase FITM2 (260 aa).

At 1–23 the chain is on the cytoplasmic side; that stretch reads MERLENCAQMFQRKFLNEAFRRH. A helical membrane pass occupies residues 24 to 44; that stretch reads CPVLLACIALGGSLLKELSPL. The Lumenal segment spans residues 45-57; sequence PDSYWNNKRNVLN. A helical transmembrane segment spans residues 58 to 78; sequence VYFVKFCWGWTLWLLLPFITL. The Cytoplasmic portion of the chain corresponds to 79-93; it reads TNYKLTGSITKVLRR. Residues 94-114 form a helical membrane-spanning segment; it reads LSSLLVGTLFWYLCTNLFLYI. The Lumenal portion of the chain corresponds to 115 to 144; it reads EHITGSCYESEALLDSIEHQDRKECRLHGG. Residues 145-165 traverse the membrane as a helical segment; that stretch reads FWHGFDISGHCFLLSYCILII. Residue H154 is part of the active site. Topologically, residues 166-189 are cytoplasmic; it reads LEETSVIRSIQFERHWHRMAINAQ. A run of 2 helical transmembrane segments spans residues 190–210 and 211–231; these read FTALSILVIIWVWMFLCTAVY and FHNIFQKVIGTAFGMLAWYIT. Residue H212 is part of the active site. Topologically, residues 232 to 260 are cytoplasmic; that stretch reads YRWWYLQPISPGLPPASASHSEKEPVYKN.

It belongs to the FIT family. FIT2 subfamily.

It is found in the endoplasmic reticulum membrane. The enzyme catalyses an acyl-CoA + H2O = an acyl-4'-phosphopantetheine + adenosine 3',5'-bisphosphate + 2 H(+). In terms of biological role, fatty acyl-coenzyme A (CoA) diphosphatase that hydrolyzes fatty acyl-CoA to yield acyl-4'-phosphopantetheine and adenosine 3',5'-bisphosphate. Preferentially hydrolyzes unsaturated long-chain acyl-CoA substrates in the endoplasmic reticulum (ER) lumen. This catalytic activity is required for maintaining ER structure and for lipid droplets (LDs) biogenesis, which are lipid storage organelles involved in maintaining lipid and energy homeostasis. May directly bind to diacylglycerol (DAGs) and triacylglycerol, which is also important for LD biogenesis. May support directional budding of nacent LDs from the ER into the cytosol by reducing DAG levels at sites of LD formation. May play a role in the regulation of cell morphology, ER morphology and cytoskeletal organization. The protein is Acyl-coenzyme A diphosphatase FITM2 of Xenopus laevis (African clawed frog).